We begin with the raw amino-acid sequence, 430 residues long: 3-phosphoshikimate 1-carboxyvinyltransferase (430 aa).

3-phosphoshikimate is bound by residues K21, S22, and R26. A phosphoenolpyruvate-binding site is contributed by K21. Residues G95 and R123 each contribute to the phosphoenolpyruvate site. T167, Q169, D315, and K342 together coordinate 3-phosphoshikimate. Phosphoenolpyruvate is bound at residue Q169. The active-site Proton acceptor is the D315. Phosphoenolpyruvate contacts are provided by R346 and R390.

This sequence belongs to the EPSP synthase family. Monomer.

The protein localises to the cytoplasm. It carries out the reaction 3-phosphoshikimate + phosphoenolpyruvate = 5-O-(1-carboxyvinyl)-3-phosphoshikimate + phosphate. Its pathway is metabolic intermediate biosynthesis; chorismate biosynthesis; chorismate from D-erythrose 4-phosphate and phosphoenolpyruvate: step 6/7. Its function is as follows. Catalyzes the transfer of the enolpyruvyl moiety of phosphoenolpyruvate (PEP) to the 5-hydroxyl of shikimate-3-phosphate (S3P) to produce enolpyruvyl shikimate-3-phosphate and inorganic phosphate. This chain is 3-phosphoshikimate 1-carboxyvinyltransferase, found in Endomicrobium trichonymphae.